The primary structure comprises 214 residues: Intermembrane phospholipid transport system binding protein MlaC (214 aa).

Residues methionine 1–alanine 28 form the signal peptide.

Belongs to the MlaC/ttg2D family.

The protein resides in the periplasm. In terms of biological role, involved in a phospholipid transport pathway that maintains lipid asymmetry in the outer membrane by retrograde trafficking of phospholipids from the outer membrane to the inner membrane. May transfer phospholipid across the periplasmic space and deliver it to the MlaFEDB complex at the inner membrane. This is Intermembrane phospholipid transport system binding protein MlaC from Haemophilus influenzae (strain ATCC 51907 / DSM 11121 / KW20 / Rd).